The primary structure comprises 162 residues: uncharacterized protein (162 aa).

Residues 1–21 (MRLCGLLIFLSYIVYVDNAVT) form the signal peptide.

This is an uncharacterized protein from Caenorhabditis elegans.